The chain runs to 197 residues: dITP/XTP pyrophosphatase (197 aa).

Residue 8–13 (TGNAGK) coordinates substrate. Glu40 and Asp69 together coordinate Mg(2+). The active-site Proton acceptor is Asp69. Substrate-binding positions include Ser70, 154–157 (FGYD), Lys177, and 182–183 (HR).

It belongs to the HAM1 NTPase family. In terms of assembly, homodimer. Mg(2+) serves as cofactor.

It carries out the reaction XTP + H2O = XMP + diphosphate + H(+). The catalysed reaction is dITP + H2O = dIMP + diphosphate + H(+). It catalyses the reaction ITP + H2O = IMP + diphosphate + H(+). Its function is as follows. Pyrophosphatase that catalyzes the hydrolysis of nucleoside triphosphates to their monophosphate derivatives, with a high preference for the non-canonical purine nucleotides XTP (xanthosine triphosphate), dITP (deoxyinosine triphosphate) and ITP. Seems to function as a house-cleaning enzyme that removes non-canonical purine nucleotides from the nucleotide pool, thus preventing their incorporation into DNA/RNA and avoiding chromosomal lesions. The chain is dITP/XTP pyrophosphatase (rdgB) from Salmonella paratyphi A (strain ATCC 9150 / SARB42).